The following is a 257-amino-acid chain: tRNA (guanine-N(1)-)-methyltransferase (257 aa).

Residues glycine 117 and 137–142 (LGDFVL) each bind S-adenosyl-L-methionine.

This sequence belongs to the RNA methyltransferase TrmD family. Homodimer.

It is found in the cytoplasm. The enzyme catalyses guanosine(37) in tRNA + S-adenosyl-L-methionine = N(1)-methylguanosine(37) in tRNA + S-adenosyl-L-homocysteine + H(+). In terms of biological role, specifically methylates guanosine-37 in various tRNAs. This Bordetella parapertussis (strain 12822 / ATCC BAA-587 / NCTC 13253) protein is tRNA (guanine-N(1)-)-methyltransferase.